The sequence spans 673 residues: Bifunctional lycopene cyclase/phytoene synthase (673 aa).

Residues 1–251 (MTALAYYQIH…IVLGLSACDH (251 aa)) are lycopene beta-cyclase. The next 7 helical transmembrane spans lie at 9–29 (IHLIYTLPILGLLGLLTSPIL), 36–56 (KISILVFIAFSATTPWDSWII), 81–101 (YEEYAFFVIQTVITGLVYVLA), 117–137 (SALSLALKALIPLPIIYLFTA), 157–177 (LSLLITPPTMLLAALSGEYAF), 187–207 (TIAAIMIPTVYLIWVDYVAVG), and 226–246 (VLPIEEAMFFLLTNLMIVLGL). The interval 258 to 673 (LHGRTIYGNK…SVVMSGWEGQ (416 aa)) is phytoene synthase. A disordered region spans residues 376–399 (KILSSPLLPPSHPSRPTGMYPLPP).

In the N-terminal section; belongs to the lycopene beta-cyclase family. This sequence in the C-terminal section; belongs to the phytoene/squalene synthase family.

It is found in the membrane. It carries out the reaction all-trans-lycopene = gamma-carotene. It catalyses the reaction gamma-carotene = all-trans-beta-carotene. The enzyme catalyses 2 (2E,6E,10E)-geranylgeranyl diphosphate = 15-cis-phytoene + 2 diphosphate. It functions in the pathway carotenoid biosynthesis; beta-carotene biosynthesis. It participates in carotenoid biosynthesis; phytoene biosynthesis; all-trans-phytoene from geranylgeranyl diphosphate: step 1/1. Functionally, bifunctional enzyme that catalyzes the reactions from geranylgeranyl diphosphate to phytoene (phytoene synthase) and lycopene to beta-carotene via the intermediate gamma-carotene (lycopene cyclase). The cyclase preferentially catalyzes the symmetric cyclization of both ends of the substrate to produce dicyclic carotenoids. Beta-carotene is further processed to the acidic carotenoid astaxanthin. In Phaffia rhodozyma (Yeast), this protein is Bifunctional lycopene cyclase/phytoene synthase.